The primary structure comprises 792 residues: MYAFYSLLIYIFYSLFRRDGGAAAVSDPGDPTQKSGGQPRGRRRPDQFTSELWSELNSLAGCSESEDGQKGAEGGAAEVSLEEALMRLAEFLSVQLGAEESCGTTPDLGKPGEVPPLLTVTSQLLALLAWTRSPRGRQALLQGTQPTCPVQPSTLDGSLSQEESSSQPTPILDEVPRDETQEHQPLQLEEEQRVWQRLEQLILGQLEELRQQLEQQEEELSRLRLGVGVTDSEKRVQHLTLENEALKQSLSLTRDLLLHWGPGPLPRLSQEEAGALLELQGQLQEAQDTTEALRVQLGAQELQLQGLRGALRQLQQETEQNCRQELQQVHGQLAGLRARMASLRQGCGDLRGLVSTFTQSCQGSLSEAQGQVSWALGALSAGKAKTQLSEGNQAPPTGCSGRLLELKGNIRVLCRLRPAEGQPSSLVSVEPGQGGTITTCYRGRQHCFRLDWVFPQDASQEEVFRQLEPAVLSCLQGYSVCIFTYGQTGTGKTYSMEGPPEDPGIAPRALQLLFREMGTGGHHHVTLSMVEIYNEAVRDLLATGPPERLVVRQGPAGQGGIQVAGLTHWDVPNLETLHQMLSLGRSNRATAATVMNQHSSRSHALVTLTLRAASPPRPQGITGTLHLVDLAGSERVWKAGVASPVQRDPNGARRLREAQAINRSLLALGGVMAALRARRPHVPFRDSQLTRLLQPALWAGTTAVLLLQISTRAEDLGETICSLKFAERVGQVELGPARRRRAPRSGTPSSLSTDTPLTGTSCTPTPSPGSPPSTSPNSCSGLTLEPPGDPPP.

Disordered regions lie at residues 22–45 (AAAV…RRRP) and 142–184 (QGTQ…QEHQ). Residues 142 to 169 (QGTQPTCPVQPSTLDGSLSQEESSSQPT) show a composition bias toward polar residues. A coiled-coil region spans residues 186–347 (LQLEEEQRVW…ARMASLRQGC (162 aa)). A Kinesin motor domain is found at 409–732 (NIRVLCRLRP…LKFAERVGQV (324 aa)). 486-493 (GQTGTGKT) contacts ATP. Positions 734–792 (LGPARRRRAPRSGTPSSLSTDTPLTGTSCTPTPSPGSPPSTSPNSCSGLTLEPPGDPPP) are disordered. A compositionally biased stretch (low complexity) spans 744–764 (RSGTPSSLSTDTPLTGTSCTP). Residues 765–774 (TPSPGSPPST) are compositionally biased toward pro residues.

Belongs to the TRAFAC class myosin-kinesin ATPase superfamily. Kinesin family. In terms of tissue distribution, present in axons and dendrites of neurons in the central and peripheral nervous systems.

The protein localises to the cytoplasm. Its subcellular location is the cytoskeleton. Its function is as follows. May play a role in microtubule-dependent retrograde axonal transport. May function as the motor for the transport of multivesicular body (MVB)-like organelles in dendrites. This Mus musculus (Mouse) protein is Kinesin-like protein KIFC2 (Kifc2).